A 162-amino-acid chain; its full sequence is MGLETEKADVQLFMDDDSYSHHSGLEYADPEKFADSGQDRDPHRLNSHLKLGFEDVIAEPVTTHSFDKVWICSHALFEISKYVMYKFLTVFLAIPLAFIAGILFATLSCLHIWILMPFVKTCLMVLPSVQTIWKSVTDVFIAPLCTSIGRSFSSVSLQLSQD.

At 1–86 (MGLETEKADV…FEISKYVMYK (86 aa)) the chain is on the cytoplasmic side. Tyr-19 carries the phosphotyrosine; by SRC modification. A phosphoserine mark is found at Ser-20 and Ser-23. A Phosphotyrosine; by SRC modification is found at Tyr-27. Ser-36 bears the Phosphoserine mark. Residues 87–107 (FLTVFLAIPLAFIAGILFATL) constitute an intramembrane region (helical). Residues 108–162 (SCLHIWILMPFVKTCLMVLPSVQTIWKSVTDVFIAPLCTSIGRSFSSVSLQLSQD) are Cytoplasmic-facing.

The protein belongs to the caveolin family. As to quaternary structure, monomer or homodimer. Interacts with CAV1; the interaction forms a stable heterooligomeric complex that is required for targeting to lipid rafts and for caveolae formation. Tyrosine phosphorylated forms do not form heterooligomers with the Tyr-19-phosphorylated form existing as a monomer or dimer, and the Tyr-27-form as a monomer only. Interacts (tyrosine phosphorylated form) with the SH2 domain-containing proteins, RASA1, NCK1 and SRC. Interacts (tyrosine phosphorylated form) with INSR, the interaction (Tyr-27-phosphorylated form) is increased on insulin stimulation. Interacts (Tyr-19 phosphorylated form) with MAPK1 (phosphorylated form); the interaction, promoted by insulin, leads to nuclear location and MAPK1 activation. Interacts with STAT3; the interaction is increased on insulin-induced tyrosine phosphorylation leading to STAT activation. Post-translationally, phosphorylated on serine and tyrosine residues. CAV1 promotes phosphorylation on Ser-23 which then targets the complex to the plasma membrane, lipid rafts and caveolae. Phosphorylation on Ser-36 appears to modulate mitosis in endothelial cells. Phosphorylation on both Tyr-19 and Tyr-27 is required for insulin-induced 'Ser-727' phosphorylation of STAT3 and its activation. Phosphorylation on Tyr-19 is required for insulin-induced phosphorylation of MAPK1 and DNA binding of STAT3. Tyrosine phosphorylation is induced by both EGF and insulin (By. similarity).

The protein localises to the nucleus. The protein resides in the cytoplasm. Its subcellular location is the golgi apparatus membrane. It is found in the cell membrane. It localises to the membrane. The protein localises to the caveola. In terms of biological role, may act as a scaffolding protein within caveolar membranes. Interacts directly with G-protein alpha subunits and can functionally regulate their activity. Acts as an accessory protein in conjunction with CAV1 in targeting to lipid rafts and driving caveolae formation. The Ser-36 phosphorylated form has a role in modulating mitosis in endothelial cells. Positive regulator of cellular mitogenesis of the MAPK signaling pathway. Required for the insulin-stimulated nuclear translocation and activation of MAPK1 and STAT3, and the subsequent regulation of cell cycle progression. The chain is Caveolin-2 (CAV2) from Papio anubis (Olive baboon).